The following is a 466-amino-acid chain: Muscarinic acetylcholine receptor M2 (466 aa).

Residues 1–22 (MNNSTNSSNNSLALTSPYKTFE) lie on the Extracellular side of the membrane. N-linked (GlcNAc...) asparagine glycosylation is found at N2, N3, N6, and N9. Residues 23-45 (VVFIVLVAGSLSLVTIIGNILVM) traverse the membrane as a helical segment. Over 46–59 (VSIKVNRHLQTVNN) the chain is Cytoplasmic. A helical membrane pass occupies residues 60–80 (YFLFSLACADLIIGVFSMNLY). Residues 81–97 (TLYTVIGYWPLGPVVCD) are Extracellular-facing. C96 and C176 are joined by a disulfide. Residues 98–119 (LWLALDYVVSNASVMNLLIISF) traverse the membrane as a helical segment. Positions 120-122 (DRY) match the Important for signaling motif. Topologically, residues 120-139 (DRYFCVTKPLTYPVKRTTKM) are cytoplasmic. Residues 140–162 (AGMMIAAAWVLSFILWAPAILFW) traverse the membrane as a helical segment. Residues 163-184 (QFIVGVRTVEDGECYIQFFSNA) lie on the Extracellular side of the membrane. The helical transmembrane segment at 185–209 (AVTFGTAIAAFYLPVIIMTVLYWHI) threads the bilayer. At 210-387 (SRASKSRIKK…PPSREKKVTR (178 aa)) the chain is on the cytoplasmic side. Residues 218 to 355 (KKDKKEPVAN…VVGSSGQNGD (138 aa)) are disordered. At S232 the chain carries Phosphoserine. Residues 254–270 (GLEHNKIQNGKAPRDPV) are compositionally biased toward basic and acidic residues. Polar residues-rich tracts occupy residues 284–293 (NDSTSVSAVA), 304–313 (DENTVSTSLG), and 334–353 (SDSC…SGQN). Residues 388-410 (TILAILLAFIITWAPYNVMVLIN) form a helical membrane-spanning segment. The Extracellular segment spans residues 411 to 418 (TFCAPCIP). A disulfide bridge connects residues C413 and C416. The chain crosses the membrane as a helical span at residues 419–442 (NTVWTIGYWLCYINSTINPACYAL). An Important for signaling motif is present at residues 436–440 (NPACY). The Cytoplasmic portion of the chain corresponds to 443–466 (CNATFKKTFKHLLMCHYKNIGATR). Phosphothreonine occurs at positions 446, 450, and 465.

This sequence belongs to the G-protein coupled receptor 1 family. Muscarinic acetylcholine receptor subfamily. CHRM2 sub-subfamily. As to quaternary structure, interacts with ARRB1 and ARRB2. Interacts with RACK1; the interaction regulates CHRM2 internalization. In terms of processing, phosphorylated in response to agonist treatment.

It is found in the cell membrane. Its subcellular location is the postsynaptic cell membrane. The muscarinic acetylcholine receptor mediates various cellular responses, including inhibition of adenylate cyclase, breakdown of phosphoinositides and modulation of potassium channels through the action of G proteins. Primary transducing effect is adenylate cyclase inhibition. Signaling promotes phospholipase C activity, leading to the release of inositol trisphosphate (IP3); this then triggers calcium ion release into the cytosol. In Homo sapiens (Human), this protein is Muscarinic acetylcholine receptor M2 (CHRM2).